We begin with the raw amino-acid sequence, 386 residues long: Innexin unc-9 (386 aa).

A run of 4 helical transmembrane segments spans residues 33 to 53 (TAIITVFAILVSAKQYVGFPI), 103 to 123 (QWVPFVLALEALLFYVPTIVW), 197 to 217 (FLYISVKILYTVNIVGQIFLL), and 282 to 302 (IFLFLWFWYFLLAGATLCSLF).

This sequence belongs to the pannexin family. Heterooligomer of unc-7 and unc-9. Interacts with F-actin. As to expression, expressed in PLM neurons (at protein level). Expressed in the nerve ring.

The protein resides in the cell membrane. It is found in the cell junction. It localises to the gap junction. In terms of biological role, structural component of gap junctions. Plays a role in maintaining gap junction activity to promote locomotion. In Caenorhabditis elegans, this protein is Innexin unc-9.